We begin with the raw amino-acid sequence, 148 residues long: 3-dehydroquinate dehydratase (148 aa).

Y23 serves as the catalytic Proton acceptor. The substrate site is built by N75, H81, and D88. The active-site Proton donor is H101. Residues 102-103 (LS) and R112 contribute to the substrate site.

This sequence belongs to the type-II 3-dehydroquinase family. As to quaternary structure, homododecamer.

It catalyses the reaction 3-dehydroquinate = 3-dehydroshikimate + H2O. It functions in the pathway metabolic intermediate biosynthesis; chorismate biosynthesis; chorismate from D-erythrose 4-phosphate and phosphoenolpyruvate: step 3/7. Its function is as follows. Catalyzes a trans-dehydration via an enolate intermediate. This is 3-dehydroquinate dehydratase from Cellvibrio japonicus (strain Ueda107) (Pseudomonas fluorescens subsp. cellulosa).